We begin with the raw amino-acid sequence, 317 residues long: Methionyl-tRNA formyltransferase (317 aa).

(6S)-5,6,7,8-tetrahydrofolate is bound at residue 112–115; the sequence is SILP.

Belongs to the Fmt family.

It catalyses the reaction L-methionyl-tRNA(fMet) + (6R)-10-formyltetrahydrofolate = N-formyl-L-methionyl-tRNA(fMet) + (6S)-5,6,7,8-tetrahydrofolate + H(+). Functionally, attaches a formyl group to the free amino group of methionyl-tRNA(fMet). The formyl group appears to play a dual role in the initiator identity of N-formylmethionyl-tRNA by promoting its recognition by IF2 and preventing the misappropriation of this tRNA by the elongation apparatus. This Mannheimia succiniciproducens (strain KCTC 0769BP / MBEL55E) protein is Methionyl-tRNA formyltransferase.